Consider the following 420-residue polypeptide: MAPK/MAK/MRK overlapping kinase (420 aa).

The region spanning 4–285 is the Protein kinase domain; it reads YKAIGKIGEG…AHQALQHPYF (282 aa). ATP contacts are provided by residues 10-18 and lysine 33; that span reads IGEGTFSEV. The active-site Proton acceptor is the aspartate 128. Over residues 311 to 322 the composition is skewed to polar residues; it reads PESSSHNWSFSQ. The interval 311–344 is disordered; it reads PESSSHNWSFSQEGRKQKQSLRHEEGHARRQGPT. Residues 323-338 show a composition bias toward basic and acidic residues; that stretch reads EGRKQKQSLRHEEGHA.

It belongs to the protein kinase superfamily. CMGC Ser/Thr protein kinase family. CDC2/CDKX subfamily. Mg(2+) serves as cofactor. In terms of processing, autophosphorylated. Highly expressed in testis, and less in kidney, brain and lung.

Its subcellular location is the cytoplasm. It localises to the cell projection. It is found in the cilium. The protein localises to the nucleus. The enzyme catalyses L-seryl-[protein] + ATP = O-phospho-L-seryl-[protein] + ADP + H(+). It carries out the reaction L-threonyl-[protein] + ATP = O-phospho-L-threonyl-[protein] + ADP + H(+). Phosphorylation appears to increase the enzymatic activity. Able to phosphorylate several exogenous substrates and to undergo autophosphorylation. Negatively regulates cilium length in a cAMP and mTORC1 signaling-dependent manner. The protein is MAPK/MAK/MRK overlapping kinase (Mok) of Mus musculus (Mouse).